Consider the following 233-residue polypeptide: Outer membrane protein MIP (233 aa).

A signal peptide spans 1–20 (MKMKLVTAAVMGLAMSTAMA). Residues 144 to 233 (SDTVTVEYTG…IHLISVKKSS (90 aa)) enclose the PPIase FKBP-type domain.

It belongs to the FKBP-type PPIase family.

The protein resides in the cell outer membrane. The catalysed reaction is [protein]-peptidylproline (omega=180) = [protein]-peptidylproline (omega=0). Essential virulence factor associated with macrophage infectivity. Exhibits PPIase activity. The protein is Outer membrane protein MIP (mip) of Legionella pneumophila (strain Corby).